Reading from the N-terminus, the 216-residue chain is Small ribosomal subunit protein uS3c (216 aa).

Residues isoleucine 43 to alanine 116 enclose the KH type-2 domain.

This sequence belongs to the universal ribosomal protein uS3 family. Part of the 30S ribosomal subunit.

The protein localises to the plastid. The protein resides in the chloroplast. This Drimys granadensis protein is Small ribosomal subunit protein uS3c (rps3).